The sequence spans 344 residues: Histone-lysine N-methyltransferase, H3 lysine-9 specific KMT1 (344 aa).

Residues 79-174 enclose the Pre-SET domain; the sequence is SGCSCAKDSE…DCPNRVVERG (96 aa). Residues Cys-81, Cys-83, Cys-89, Cys-94, Cys-96, Cys-156, Cys-160, Cys-162, Cys-166, and Cys-272 each coordinate Zn(2+). The SET domain maps to 177–312; it reads IPLEIFRTPD…EGEELTFDYV (136 aa). Tyr-311 contacts S-adenosyl-L-methionine. In terms of domain architecture, Post-SET spans 328–344; sequence HMTRCLCGSKKCRKFLW. Positions 332, 334, and 339 each coordinate Zn(2+).

It belongs to the class V-like SAM-binding methyltransferase superfamily.

The protein localises to the chromosome. It catalyses the reaction L-lysyl(9)-[histone H3] + 3 S-adenosyl-L-methionine = N(6),N(6),N(6)-trimethyl-L-lysyl(9)-[histone H3] + 3 S-adenosyl-L-homocysteine + 3 H(+). In terms of biological role, histone methyltransferase that specifically trimethylates histone H3 to form H3K9me3. H3K9me3 marks chromatin regions for DNA methylation. Plays a key role in the regulation of the biosynthesis of the gamma-pyrones fusapyrone (FPY) and deoxyfusapyrone (dFPY). This Fusarium mangiferae (Mango malformation disease fungus) protein is Histone-lysine N-methyltransferase, H3 lysine-9 specific KMT1.